A 574-amino-acid polypeptide reads, in one-letter code: MASTEGANNMPKQVEVRMHDSHLGSEEPKHRHLGLRLCDKLGKNLLLTLTVFGVILGAVCGGLLRLASPIHPDVVMLIAFPGDILMRMLKMLILPLIISSLITGLSGLDAKASGRLGTRAMVYYMSTTIIAAVLGVILVLAIHPGNPKLKKQLGPGKKNDEVSSLDAFLDLIRNLFPENLVQACFQQIQTVTKKVLVAPPPDEEANATSAVVSLLNETVTEVPEETKMVIKKGLEFKDGMNVLGLIGFFIAFGIAMGKMGDQAKLMVDFFNILNEIVMKLVIMIMWYSPLGIACLICGKIIAIKDLEVVARQLGMYMVTVIIGLIIHGGIFLPLIYFVVTRKNPFSFFAGIFQAWITALGTASSAGTLPVTFRCLEENLGIDKRVTRFVLPVGATINMDGTALYEAVAAIFIAQMNGVVLDGGQIVTVSLTATLASVGAASIPSAGLVTMLLILTAVGLPTEDISLLVAVDWLLDRMRTSVNVVGDSFGAGIVYHLSKSELDTIDSQHRVHEDIEMTKTQSIYDDMKNHRESNSNQCVYAAHNSVIVDECKVTLAANGKSADCSVEEEPWKREK.

Residues 1–44 are Cytoplasmic-facing; it reads MASTEGANNMPKQVEVRMHDSHLGSEEPKHRHLGLRLCDKLGKN. Phosphoserine occurs at positions 3, 21, and 25. C38 is lipidated: S-palmitoyl cysteine. The chain crosses the membrane as a helical span at residues 45–64; sequence LLLTLTVFGVILGAVCGGLL. Residues 65 to 87 are Extracellular-facing; sequence RLASPIHPDVVMLIAFPGDILMR. The chain crosses the membrane as a helical span at residues 88-108; sequence MLKMLILPLIISSLITGLSGL. Topologically, residues 109-120 are cytoplasmic; the sequence is DAKASGRLGTRA. Residues 121–142 traverse the membrane as a helical segment; it reads MVYYMSTTIIAAVLGVILVLAI. Residues 143–235 lie on the Extracellular side of the membrane; that stretch reads HPGNPKLKKQ…TKMVIKKGLE (93 aa). N-linked (GlcNAc...) asparagine glycosylation is found at N206 and N216. A helical membrane pass occupies residues 236-259; the sequence is FKDGMNVLGLIGFFIAFGIAMGKM. At 260-268 the chain is on the cytoplasmic side; that stretch reads GDQAKLMVD. The helical transmembrane segment at 269 to 296 threads the bilayer; the sequence is FFNILNEIVMKLVIMIMWYSPLGIACLI. Topologically, residues 297-317 are extracellular; the sequence is CGKIIAIKDLEVVARQLGMYM. The chain crosses the membrane as a helical span at residues 318–339; the sequence is VTVIIGLIIHGGIFLPLIYFVV. The Cytoplasmic segment spans residues 340 to 344; that stretch reads TRKNP. An intramembrane region (discontinuously helical) is located at residues 345–375; it reads FSFFAGIFQAWITALGTASSAGTLPVTFRCL. 362–364 contacts L-aspartate; the sequence is ASS. The Cytoplasmic segment spans residues 376–384; that stretch reads EENLGIDKR. A helical membrane pass occupies residues 385 to 411; sequence VTRFVLPVGATINMDGTALYEAVAAIF. Na(+)-binding residues include G393, T395, and N397. T401 lines the L-aspartate pocket. The Extracellular segment spans residues 412–424; the sequence is IAQMNGVVLDGGQ. An intramembrane region (discontinuously helical) is located at residues 425–458; it reads IVTVSLTATLASVGAASIPSAGLVTMLLILTAVG. An L-aspartate-binding site is contributed by 442–446; it reads IPSAG. Topologically, residues 459–471 are extracellular; that stretch reads LPTEDISLLVAVD. A helical transmembrane segment spans residues 472–493; that stretch reads WLLDRMRTSVNVVGDSFGAGIV. Positions 475 and 482 each coordinate L-aspartate. N482 and D486 together coordinate Na(+). The Cytoplasmic portion of the chain corresponds to 494 to 574; sequence YHLSKSELDT…VEEEPWKREK (81 aa). A phosphoserine mark is found at S506, S521, S532, and S534. Y539 carries the phosphotyrosine modification. A phosphoserine mark is found at S544, S560, and S564.

Belongs to the dicarboxylate/amino acid:cation symporter (DAACS) (TC 2.A.23) family. SLC1A2 subfamily. As to quaternary structure, homotrimer. Isoform 3 can oligomerize with isoform 1. Interacts with AJUBA. Post-translationally, glycosylated. In terms of processing, palmitoylation at Cys-38 is not required for correct subcellular localization, but is important for glutamate uptake activity.

The protein localises to the cell membrane. The enzyme catalyses K(+)(in) + L-glutamate(out) + 3 Na(+)(out) + H(+)(out) = K(+)(out) + L-glutamate(in) + 3 Na(+)(in) + H(+)(in). The catalysed reaction is K(+)(in) + L-aspartate(out) + 3 Na(+)(out) + H(+)(out) = K(+)(out) + L-aspartate(in) + 3 Na(+)(in) + H(+)(in). It carries out the reaction D-aspartate(out) + K(+)(in) + 3 Na(+)(out) + H(+)(out) = D-aspartate(in) + K(+)(out) + 3 Na(+)(in) + H(+)(in). Sodium-dependent, high-affinity amino acid transporter that mediates the uptake of L-glutamate and also L-aspartate and D-aspartate. Functions as a symporter that transports one amino acid molecule together with two or three Na(+) ions and one proton, in parallel with the counter-transport of one K(+) ion. Mediates Cl(-) flux that is not coupled to amino acid transport; this avoids the accumulation of negative charges due to aspartate and Na(+) symport. Essential for the rapid removal of released glutamate from the synaptic cleft, and for terminating the postsynaptic action of glutamate. The protein is Excitatory amino acid transporter 2 of Homo sapiens (Human).